Reading from the N-terminus, the 367-residue chain is tRNA-specific 2-thiouridylase MnmA (367 aa).

ATP contacts are provided by residues 11–18 and Met-37; that span reads GLSGGVDS. The interaction with target base in tRNA stretch occupies residues 109–111; sequence NPD. The active-site Nucleophile is Cys-114. Cysteines 114 and 211 form a disulfide. Gly-139 contributes to the ATP binding site. Residues 161-163 form an interaction with tRNA region; the sequence is KDQ. Cys-211 (cysteine persulfide intermediate) is an active-site residue.

Belongs to the MnmA/TRMU family.

The protein resides in the cytoplasm. The enzyme catalyses S-sulfanyl-L-cysteinyl-[protein] + uridine(34) in tRNA + AH2 + ATP = 2-thiouridine(34) in tRNA + L-cysteinyl-[protein] + A + AMP + diphosphate + H(+). In terms of biological role, catalyzes the 2-thiolation of uridine at the wobble position (U34) of tRNA, leading to the formation of s(2)U34. The protein is tRNA-specific 2-thiouridylase MnmA of Mycoplasma genitalium (strain ATCC 33530 / DSM 19775 / NCTC 10195 / G37) (Mycoplasmoides genitalium).